A 529-amino-acid chain; its full sequence is Transcription factor kayak (529 aa).

The span at 118-134 (LQGTDSDNSNASWADAQ) shows a compositional bias: polar residues. Disordered stretches follow at residues 118–166 (LQGT…SVNG) and 180–239 (NAGR…CRKR). Composition is skewed to low complexity over residues 142–153 (TDTSSAHTDSTS) and 182–201 (GRGS…TPAR). The 64-residue stretch at 219–282 (EEKRRIRRER…NQLEFFLRAH (64 aa)) folds into the bZIP domain. Residues 221–240 (KRRIRRERNKQAAARCRKRR) form a basic motif region. Positions 247-275 (LTYEVEQLEKKRDGLKKEMETLTDVKNQL) are leucine-zipper. Disordered stretches follow at residues 311-390 (AGSC…PMST) and 493-529 (DGGT…LVSL). Over residues 315–332 (DSGSSSHHNNNSNDSSNG) the composition is skewed to low complexity. Residues 340-350 (SLNSTGRSNSP) are compositionally biased toward polar residues. Ser349 carries the phosphoserine modification. Over residues 363 to 375 (DGGLDSSCLLDQD) the composition is skewed to low complexity. Residues 376–387 (GPPPSKRFPLPP) are compositionally biased toward pro residues.

The protein belongs to the bZIP family. Fos subfamily. As to quaternary structure, homodimer. Heterodimer with Jra. The kay-Jra heterodimer binds more stably to the AP-1 site than either of the two proteins alone.

Its subcellular location is the nucleus. In terms of biological role, developmentally regulated transcription factor AP-1 binds and recognizes the enhancer DNA sequence: 5'-TGA[CG]TCA-3'. May play a role in the function or determination of a particular subset of cells in the developing embryo. Is able to carry out its function either independently of or in conjunction with Jra. This chain is Transcription factor kayak, found in Drosophila ananassae (Fruit fly).